A 157-amino-acid chain; its full sequence is Small ribosomal subunit protein uS7 (157 aa).

This sequence belongs to the universal ribosomal protein uS7 family. In terms of assembly, part of the 30S ribosomal subunit. Contacts proteins S9 and S11.

In terms of biological role, one of the primary rRNA binding proteins, it binds directly to 16S rRNA where it nucleates assembly of the head domain of the 30S subunit. Is located at the subunit interface close to the decoding center, probably blocks exit of the E-site tRNA. In Leptospira biflexa serovar Patoc (strain Patoc 1 / Ames), this protein is Small ribosomal subunit protein uS7.